The sequence spans 163 residues: Phosphopantetheine adenylyltransferase (163 aa).

Position 10 (Thr10) interacts with substrate. Residues 10-11 and His18 contribute to the ATP site; that span reads TF. Lys42, Leu75, and Arg89 together coordinate substrate. Residues 90–92, Glu100, and 125–131 each bind ATP; these read GVR and YTYVASS.

Belongs to the bacterial CoaD family. In terms of assembly, homohexamer. It depends on Mg(2+) as a cofactor.

Its subcellular location is the cytoplasm. It catalyses the reaction (R)-4'-phosphopantetheine + ATP + H(+) = 3'-dephospho-CoA + diphosphate. It participates in cofactor biosynthesis; coenzyme A biosynthesis; CoA from (R)-pantothenate: step 4/5. Its function is as follows. Reversibly transfers an adenylyl group from ATP to 4'-phosphopantetheine, yielding dephospho-CoA (dPCoA) and pyrophosphate. The chain is Phosphopantetheine adenylyltransferase from Pelodictyon phaeoclathratiforme (strain DSM 5477 / BU-1).